Consider the following 300-residue polypeptide: Diaminopimelate epimerase (300 aa).

Residues asparagine 15, glutamine 47, and asparagine 67 each coordinate substrate. Cysteine 76 acts as the Proton donor in catalysis. Residues 77–78 (GN), asparagine 163, asparagine 197, and 215–216 (ER) each bind substrate. The Proton acceptor role is filled by cysteine 224. 225–226 (GS) contributes to the substrate binding site. Residues 275–300 (SGTFDPATGEWSRDAQNDKPTDRGAA) form a disordered region. Residues 285-300 (WSRDAQNDKPTDRGAA) show a composition bias toward basic and acidic residues.

This sequence belongs to the diaminopimelate epimerase family. Homodimer.

The protein localises to the cytoplasm. It carries out the reaction (2S,6S)-2,6-diaminopimelate = meso-2,6-diaminopimelate. The protein operates within amino-acid biosynthesis; L-lysine biosynthesis via DAP pathway; DL-2,6-diaminopimelate from LL-2,6-diaminopimelate: step 1/1. Functionally, catalyzes the stereoinversion of LL-2,6-diaminopimelate (L,L-DAP) to meso-diaminopimelate (meso-DAP), a precursor of L-lysine and an essential component of the bacterial peptidoglycan. This is Diaminopimelate epimerase from Brucella anthropi (strain ATCC 49188 / DSM 6882 / CCUG 24695 / JCM 21032 / LMG 3331 / NBRC 15819 / NCTC 12168 / Alc 37) (Ochrobactrum anthropi).